The following is a 413-amino-acid chain: Protein trichome birefringence-like 31 (413 aa).

A helical; Signal-anchor for type II membrane protein membrane pass occupies residues 12 to 34 (IQSIFQVVLVSLLVLGSVRWILD). A GDS motif motif is present at residues 141–143 (GDS). The DCXHWCLPGXXDXWN motif signature appears at 384-398 (DCIHWCLPGVPDTWN).

The protein belongs to the PC-esterase family. TBL subfamily.

The protein localises to the membrane. May act as a bridging protein that binds pectin and other cell wall polysaccharides. Probably involved in maintaining esterification of pectins. May be involved in the specific O-acetylation of cell wall polymers. This chain is Protein trichome birefringence-like 31 (TBL31), found in Arabidopsis thaliana (Mouse-ear cress).